The following is a 528-amino-acid chain: Inorganic phosphate transporter 1-2 (528 aa).

The Cytoplasmic portion of the chain corresponds to 1–24; the sequence is MAGSQLNVLVKLDQAKTQWYHFMA. Residues 25-45 traverse the membrane as a helical segment; it reads IVIAGMGFFTDAYDLFCIALV. Topologically, residues 46 to 71 are extracellular; the sequence is TKLLGRLYYTDITKPNPGTLPPNVSS. Residues 72-92 traverse the membrane as a helical segment; the sequence is AVTGVALCGTLAGQLFFGWLG. Residues 93–99 lie on the Cytoplasmic side of the membrane; the sequence is DKLGRKS. Residues 100–120 form a helical membrane-spanning segment; it reads VYGFTLILMVVCSIASGLSFG. Over 121–125 the chain is Extracellular; the sequence is HTPKS. Residues 126–146 traverse the membrane as a helical segment; that stretch reads VIATLCFFRFWLGFGIGGDYP. At 147–163 the chain is on the cytoplasmic side; that stretch reads LSATIMSEYASKKTRGA. A helical transmembrane segment spans residues 164 to 184; sequence FIAAVFAMQGFGILFGAIVAL. The Extracellular segment spans residues 185–212; the sequence is VVSAGFRHAYPAPSYAQNPAASLAPQAD. A helical membrane pass occupies residues 213 to 232; the sequence is YTWRLILMFGTIPAGLTYYW. The Cytoplasmic segment spans residues 233–296; that stretch reads RMKMPETARY…RQFMKRHGMH (64 aa). Residues 297–317 traverse the membrane as a helical segment; that stretch reads LLATTSTWFLLDIAFYSQNLF. Topologically, residues 318–348 are extracellular; that stretch reads QKDIFSKVGWIPPAKTMNALEELYRISRAQA. Residues 349-369 traverse the membrane as a helical segment; that stretch reads LIALCGTIPGYWFTVAFIDIV. Residues 370–371 are Cytoplasmic-facing; the sequence is GR. A helical membrane pass occupies residues 372–392; sequence FWIQIMGFFMMTVFMLALGVP. The Extracellular segment spans residues 393–405; sequence YDHWTHPAHHTGF. The helical transmembrane segment at 406–426 threads the bilayer; the sequence is VVLYALTFFFANFGPNSTTFI. Over 427–442 the chain is Cytoplasmic; the sequence is VPAEIFPARLRSTCHG. The helical transmembrane segment at 443–463 threads the bilayer; the sequence is ISAASGKAGAIIGAFGFLYAA. Residues 464-481 are Extracellular-facing; sequence QDQHNPDAGYSRGIGIRN. Residues 482 to 502 traverse the membrane as a helical segment; sequence ALFVLAGTNFLGMLMTLLVPE. Residues 503 to 528 are Cytoplasmic-facing; sequence SKGLSLEEMSKDNVVDETAQEAIAQA.

The protein belongs to the major facilitator superfamily. Phosphate:H(+) symporter (TC 2.A.1.9) family. Expressed in the root stele and leaf phloem and xylem.

It is found in the membrane. Its function is as follows. Low-affinity transporter for inorganic phosphate (Pi). Involved in internal Pi transport from root to shoot. Responsible for most of the PHR2-mediated accumulation of excess shoot Pi under abundant Pi conditions, but not for PHO2-mediated accumulation of excess shoot Pi. Acts as a H(+):phosphate symporter. This is Inorganic phosphate transporter 1-2 (PTH1-2) from Oryza sativa subsp. japonica (Rice).